The chain runs to 246 residues: Carboxylesterase (246 aa).

The Nucleophile role is filled by S93. Catalysis depends on charge relay system residues D192 and H222.

The protein belongs to the lipase/esterase LIP3/BchO family. In terms of assembly, homodimer.

The catalysed reaction is a carboxylic ester + H2O = an alcohol + a carboxylate + H(+). Its function is as follows. Involved in the detoxification of xenobiotics. Shows maximal activity with C6 substrates, with gradually decreasing activity from C8 to C12 substrates. No activity for higher chain length substrates acids rather than long-chain ones. The sequence is that of Carboxylesterase (est) from Geobacillus stearothermophilus (Bacillus stearothermophilus).